The following is a 211-amino-acid chain: uncharacterized protein (211 aa).

Residues 187–211 (LKVSEQENSEAPVSEPKEDEKTKKD) are disordered. Residues 201–211 (EPKEDEKTKKD) show a composition bias toward basic and acidic residues.

This is an uncharacterized protein from Spiroplasma citri.